Consider the following 409-residue polypeptide: MSSARLLESQTSDEDNEDIERRPHQSHSRSCSNNTTPTHPPHPMVRKGGVARRICLIGGALFLLLVALCYLTLSGDTRLGGSEDSEEGSHHGLDSMNFRPLNETVHICSESYEDRRQFMQDKPQSDYVQLPVIYFVTPTYPRREQIPELTRLAHTLLHIPRLHWLVADDQEKCNDYMDTLLYRFGMPFTHMVSPMPSKFRNEKPAPRGVANRRAALQWIRQHNLTNGILYFGDDDNTYDLRLFSEIRKTQRVSMFPVGLIADYGVSGPVVRKGKVVAFLDSWVAGRRWPVDMAGFAVNLEYMAQYPYVNMPYKPGYEEDLFLRSIGLQMNLIEPRGNNCTEILVWHTQTKSKKLGMVRLESKYLDDRSNLGALLHNLKLMGVTSTTESEGRNALISKNGRENPHSKILS.

The interval 1 to 45 (MSSARLLESQTSDEDNEDIERRPHQSHSRSCSNNTTPTHPPHPMV) is disordered. The Cytoplasmic portion of the chain corresponds to 1–53 (MSSARLLESQTSDEDNEDIERRPHQSHSRSCSNNTTPTHPPHPMVRKGGVARR). Residue serine 9 is modified to Phosphoserine. A Phosphothreonine modification is found at threonine 11. 2 positions are modified to phosphoserine: serine 12 and serine 32. Residues 54 to 73 (ICLIGGALFLLLVALCYLTL) form a helical; Signal-anchor for type II membrane protein membrane-spanning segment. Topologically, residues 74–409 (SGDTRLGGSE…RENPHSKILS (336 aa)) are lumenal. Residues asparagine 102 and asparagine 223 are each glycosylated (N-linked (GlcNAc...) asparagine). Position 235 (aspartate 235) interacts with Mn(2+). The Proton acceptor role is filled by glutamate 318. N-linked (GlcNAc...) asparagine glycosylation occurs at asparagine 338. Residues 389-409 (EGRNALISKNGRENPHSKILS) are disordered. Over residues 398 to 409 (NGRENPHSKILS) the composition is skewed to basic and acidic residues.

This sequence belongs to the glycosyltransferase 43 family. The cofactor is Mn(2+).

It localises to the golgi apparatus membrane. It catalyses the reaction 3-O-(beta-D-galactosyl-(1-&gt;3)-beta-D-galactosyl-(1-&gt;4)-beta-D-xylosyl)-L-seryl-[protein] + UDP-alpha-D-glucuronate = 3-O-(beta-D-GlcA-(1-&gt;3)-beta-D-Gal-(1-&gt;3)-beta-D-Gal-(1-&gt;4)-beta-D-Xyl)-L-seryl-[protein] + UDP + H(+). Its pathway is protein modification; protein glycosylation. Involved in the biosynthesis of L2/HNK-1 carbohydrate epitope on both glycolipids and glycoproteins. Enzyme has a broad specificity. The polypeptide is Galactosylgalactosylxylosylprotein 3-beta-glucuronosyltransferase S (GlcAT-S) (Drosophila melanogaster (Fruit fly)).